Here is a 294-residue protein sequence, read N- to C-terminus: Ribosomal RNA small subunit methyltransferase A (294 aa).

6 residues coordinate S-adenosyl-L-methionine: Asn29, Val31, Gly56, Glu77, Asp107, and Asn126.

The protein belongs to the class I-like SAM-binding methyltransferase superfamily. rRNA adenine N(6)-methyltransferase family. RsmA subfamily.

It localises to the cytoplasm. The catalysed reaction is adenosine(1518)/adenosine(1519) in 16S rRNA + 4 S-adenosyl-L-methionine = N(6)-dimethyladenosine(1518)/N(6)-dimethyladenosine(1519) in 16S rRNA + 4 S-adenosyl-L-homocysteine + 4 H(+). In terms of biological role, specifically dimethylates two adjacent adenosines (A1518 and A1519) in the loop of a conserved hairpin near the 3'-end of 16S rRNA in the 30S particle. May play a critical role in biogenesis of 30S subunits. The chain is Ribosomal RNA small subunit methyltransferase A from Mycobacterium sp. (strain JLS).